The primary structure comprises 57 residues: Beta-defensin 3 (57 aa).

The residue at position 16 (glutamine 16) is a Pyrrolidone carboxylic acid. Cystine bridges form between cysteine 24-cysteine 53, cysteine 31-cysteine 46, and cysteine 36-cysteine 54.

Belongs to the beta-defensin family. Neutrophilic granules.

It is found in the secreted. Its function is as follows. Has bactericidal activity. Active against E.coli ML35 and S.aureus 502A. In Bos taurus (Bovine), this protein is Beta-defensin 3 (DEFB3).